The chain runs to 397 residues: Thioredoxin-interacting protein (397 aa).

Residue lysine 213 forms a Glycyl lysine isopeptide (Lys-Gly) (interchain with G-Cter in ubiquitin) linkage. Position 362 is a phosphoserine (serine 362).

This sequence belongs to the arrestin family. As to quaternary structure, homodimer; disulfide-linked. Interacts with TXN/thioredoxin through its redox-active site. Interacts with transcriptional repressors ZBTB16, ZBTB32 and HDAC1. Interacts with DDIT4. Post-translationally, ubiquitinated; undergoes heterotypic 'Lys-48'-/'Lys-63'-branched polyubiquitination catalyzed by ITCH and UBR5 resulting in proteasomal degradation. Deubiquitinated by USP5, leading to TXNIP stabilization. As to expression, ubiquitously expressed.

The protein localises to the cytoplasm. In terms of biological role, may act as an oxidative stress mediator by inhibiting thioredoxin activity or by limiting its bioavailability. Interacts with COPS5 and restores COPS5-induced suppression of CDKN1B stability, blocking the COPS5-mediated translocation of CDKN1B from the nucleus to the cytoplasm. Functions as a transcriptional repressor, possibly by acting as a bridge molecule between transcription factors and corepressor complexes, and over-expression will induce G0/G1 cell cycle arrest. Required for the maturation of natural killer cells. Acts as a suppressor of tumor cell growth. Inhibits the proteasomal degradation of DDIT4, and thereby contributes to the inhibition of the mammalian target of rapamycin complex 1 (mTORC1). In Mus musculus (Mouse), this protein is Thioredoxin-interacting protein (Txnip).